A 38-amino-acid chain; its full sequence is Large ribosomal subunit protein bL36 (38 aa).

It belongs to the bacterial ribosomal protein bL36 family.

The protein is Large ribosomal subunit protein bL36 of Phytoplasma mali (strain AT).